Here is a 565-residue protein sequence, read N- to C-terminus: Probable protease Gilli_2517 (565 aa).

Functionally, probably a dedicated protease for substrate gasdermin bGSDM; cleaves the bGSDM precursor, releasing the pore-forming moiety, which integrates into the membrane and triggers cell death. Involved in defense against bacteriophages. Expression of bGSDM and this neighboring protease is not toxic in E.coli. This Gillisia limnaea (strain DSM 15749 / LMG 21470 / R-8282) protein is Probable protease Gilli_2517.